We begin with the raw amino-acid sequence, 338 residues long: Phosphonates-binding periplasmic protein (338 aa).

Positions 1–26 (MNAKIIASLAFTSMFSLSTLLSPAHA) are cleaved as a signal peptide.

The protein belongs to the phosphate/phosphite/phosphonate binding protein family. In terms of assembly, the complex is composed of two ATP-binding proteins (PhnC), two transmembrane proteins (PhnE) and a solute-binding protein (PhnD).

The protein resides in the periplasm. Its function is as follows. Phosphonate binding protein that is part of the phosphonate uptake system. Exhibits high affinity for 2-aminoethylphosphonate, and somewhat less affinity to ethylphosphonate, methylphosphonate, phosphonoacetate and phenylphosphonate. The chain is Phosphonates-binding periplasmic protein (phnD) from Escherichia coli (strain K12).